The sequence spans 1072 residues: Serine/threonine-protein kinase 11-interacting protein (1072 aa).

LRR repeat units follow at residues 109 to 130 (SLRQLELRGVPIHSLCGLRGIY), 132 to 152 (QLESLVCNRSIQALEELLSAC), 164 to 185 (ALLSADFSYNALRSLDSSLRLL), 187 to 209 (ALRFLNLSHNHLQDCKGFLMDLC), 210 to 231 (ELYHLDISYNHLRLVPRVGPSG), 233 to 254 (ALGTLILRANELRSLQGLEQLK), 255 to 276 (NLRHLDVAYNLLEGHTELAPLW), and 280 to 301 (ELRKLYLEGNPLWFHPAHRAAT). The disordered stretch occupies residues 333–366 (DSSGLGPVIQPLSWPVGSTTETSGGPELSDSLSS). Serine 388, serine 390, and serine 393 each carry phosphoserine. A compositionally biased stretch (polar residues) spans 441 to 454 (MGSSPLSTTKTPAL). 2 disordered regions span residues 441-522 (MGSS…EQKA) and 741-762 (RPDGIPPQTSISHDRSSWSLSP). Composition is skewed to basic and acidic residues over residues 478-492 (KESPEKVSEEGRVEP) and 501-510 (EQDKEEGSRE). Serine 757, serine 761, and serine 763 each carry phosphoserine. The interval 967 to 993 (HAESPLPVVSDETSEQPASLGPGPSLQ) is disordered.

This sequence belongs to the STK11IP family. As to quaternary structure, found in a ternary complex composed of STK11/LKB1, STK11IP and SMAD4. Interacts with SMAD4. Interacts with STK11/LKB1.

The protein localises to the cytoplasm. May regulate STK11/LKB1 function by controlling its subcellular localization. In Mus musculus (Mouse), this protein is Serine/threonine-protein kinase 11-interacting protein (Stk11ip).